The following is a 104-amino-acid chain: Large ribosomal subunit protein uL24 (104 aa).

The protein belongs to the universal ribosomal protein uL24 family. In terms of assembly, part of the 50S ribosomal subunit.

One of two assembly initiator proteins, it binds directly to the 5'-end of the 23S rRNA, where it nucleates assembly of the 50S subunit. Functionally, one of the proteins that surrounds the polypeptide exit tunnel on the outside of the subunit. In Clostridium beijerinckii (strain ATCC 51743 / NCIMB 8052) (Clostridium acetobutylicum), this protein is Large ribosomal subunit protein uL24.